Consider the following 450-residue polypeptide: Sulfide:quinone oxidoreductase, mitochondrial (450 aa).

Residues 53-54 (SG), glutamate 75, glutamine 83, and valine 118 contribute to the FAD site. Lysine 173 carries the post-translational modification N6-acetyllysine. Cysteine 201 functions as the Cysteine persulfide intermediate in the catalytic mechanism. Cysteines 201 and 379 form a disulfide. Residue aspartate 336 participates in FAD binding. Serine 343 bears the Phosphoserine mark. 344–347 (KTAA) serves as a coordination point for FAD. The active-site Cysteine persulfide intermediate is the cysteine 379.

This sequence belongs to the SQRD family. The cofactor is FAD.

Its subcellular location is the mitochondrion. The catalysed reaction is ubiquinone-10 + hydrogen sulfide + sulfite + 2 H(+) = ubiquinol-10 + thiosulfate. It carries out the reaction a quinone + hydrogen sulfide + glutathione + H(+) = S-sulfanylglutathione + a quinol. It catalyses the reaction ubiquinone-10 + hydrogen sulfide + glutathione + H(+) = S-sulfanylglutathione + ubiquinol-10. In terms of biological role, catalyzes the oxidation of hydrogen sulfide with the help of a quinone, such as ubiquinone-10, giving rise to thiosulfate and ultimately to sulfane (molecular sulfur) atoms. Requires an additional electron acceptor; can use sulfite, sulfide or cyanide (in vitro). It is believed the in vivo electron acceptor is glutathione. This chain is Sulfide:quinone oxidoreductase, mitochondrial, found in Homo sapiens (Human).